Consider the following 772-residue polypeptide: MHPGGQAILFATDLDESSSVNAQLCELRKDGTMVDDSTQGGELEASEAGAEARHHWTELAQRILDAQDAYYARDAPTISDAEYDRLMVELKKVEDDHPELRTPDSPTQRVGAPQRITDFAPVKHLERLLSLDNVFTRDELSEWMNRVATAVGKIPNFLCELKIDGLAVDLVYRDGQLVSGATRGDGRIGEDVTANVRTIAAIPRKLTGDDVPRLLEVRGEVFFPVADFTDLNAALIEAGKNPFANPRNAAAGSLRQKDSRVTASRPLSMIVHGIGVLEGHDFPSQGHAYDKLAQWGLPVSPYFKIVEHVDEVHEFVTRWGESRDEASHQIDGVVVKVDDVSLQRKLGATSRAPRWAIAYKYPPEEVNTELLDIRVNVGRTGRVTPYGVMRPVTVAGSTVEMATLHNAFEVKRKGVLIGDTVVLRKAGDVIPEILGPVVELRNGTEREFLMPDHCPSCGAELAYEKNGDKDLRCPNAQGCPSQLHERVFGLASRGALDIEALGWEAAIALTDPENQRPGDDEVAEELPKRQTAVLSSEAGLFDLQLDDLAEIKVWRRRKVNGGPGPWQLEPYFFTKATAKKPSTPTATTKKMFDELAKAKSQPLWRVLVALSIRHVGPTAARALATHFGSVEAIREASVEELAGVDGVGEIIAESVKRWFEVDWHQEIISRWAAAGVRMADDRDEAPEQTLEGLTVVVTGSLEGFSRDEAKEAIVSRGGKAAGSVSRKTDYVVVGENAGSKETKARDLGRPILDEAGFRYLLENGPQGITTIG.

NAD(+)-binding positions include 80–84 (DAEYD), 130–131 (SL), and E160. K162 (N6-AMP-lysine intermediate) is an active-site residue. R183, E220, K336, and K360 together coordinate NAD(+). Positions 454, 457, 473, and 479 each coordinate Zn(2+). One can recognise a BRCT domain in the interval 685–772 (APEQTLEGLT…NGPQGITTIG (88 aa)).

It belongs to the NAD-dependent DNA ligase family. LigA subfamily. Mg(2+) is required as a cofactor. Mn(2+) serves as cofactor.

It carries out the reaction NAD(+) + (deoxyribonucleotide)n-3'-hydroxyl + 5'-phospho-(deoxyribonucleotide)m = (deoxyribonucleotide)n+m + AMP + beta-nicotinamide D-nucleotide.. In terms of biological role, DNA ligase that catalyzes the formation of phosphodiester linkages between 5'-phosphoryl and 3'-hydroxyl groups in double-stranded DNA using NAD as a coenzyme and as the energy source for the reaction. It is essential for DNA replication and repair of damaged DNA. In Cutibacterium acnes (strain DSM 16379 / KPA171202) (Propionibacterium acnes), this protein is DNA ligase.